We begin with the raw amino-acid sequence, 292 residues long: Complex I assembly factor TIMMDC1, mitochondrial (292 aa).

A run of 2 helical transmembrane segments spans residues 146 to 168 (WSWR…TVYR) and 195 to 215 (GLLS…VLIL).

The protein belongs to the Tim17/Tim22/Tim23 family. Associates with the intermediate 315 kDa subcomplex of incompletely assembled complex I.

It is found in the mitochondrion membrane. In terms of biological role, chaperone protein involved in the assembly of the mitochondrial NADH:ubiquinone oxidoreductase complex (complex I). Participates in constructing the membrane arm of complex I. The polypeptide is Complex I assembly factor TIMMDC1, mitochondrial (timmdc1) (Danio rerio (Zebrafish)).